Reading from the N-terminus, the 921-residue chain is MFARLARALFGSANDRTLKAYQRRVPEINALEPAVQALSDEQLRHKTTEFKERLEKGETLDGLLPEAFAVCREASRRVLGKRHFDVQLIGGMVLHAGRIAEMRTGEGKTLVATLAVYLNALSGKGVHVVTVNDYLARRDAEEMSILYSFLGLTTGVIVPNLSDGERREAYAADITYGTNNEFGFDYLRDNMKYSLADMVQRPFNHAIVDEVDSILIDEARTPLIISGPADDSSDLYRSVDDVVVKLVQEPDVYDKDEKLRSVTLTEHGSHRVEELLAEAGVLQDGGLYDIHNVAVVHHVQQSLRAHTLFTRDVDYIVRDGKVVIIDEFTGRMMDGRRYSDGLHQALEAKEHVEIQQENQTLASITFQNYFRLYPKLSGMTGTAMTEADEFAEIYHLDVVEIPTNLPVRRIDTDDEVYLTAAEKFSAVADLIKEIHETGQPILVGTTSIEKSEYLSHILTQRGIPHNVLNARQHEKEAIIVAQAGAPGAITIATNMAGRGTDIKLGGNIEMLVKASTEGVEDEAQRESVEQNIRAIVEEHHEEVHKAGGLYVIGTERHESRRVDNQLRGRSGRQGDPGNSRFFLSLEDDLIRIFASDRMGAMMQKMGLKEGEAIVHPWLNKALEKAQKRVEARNFDMRKNTLKYDDVMNDQRKEVYAQRREYMATDDLSGVIAELREHTIEDLVHAHIPEKSFAEAWDTEGLTKEVSRILNLDLPIADWAKEDGMDSEGVIERIEAEAAKAQAARTANMGPELMRLIEKQVVLTTFDAVWKEYLHGLDQLRQGIGLRAYGQRDPLNEYKQEAFQMFTAMLDDMRIRVTETMCRIQAVSEPPPFPVINTETSGPSEEPAGLFSQGTTGGDIPAPQPMAGFPSAAPMPPRPQPVPTGAEPDAATLQRWYAETPRNALCPCGSGLKFKHCHGRLA.

ATP-binding positions include Gln-87, 105 to 109, and Asp-501; that span reads GEGKT. A disordered region spans residues 831 to 886; the sequence is PFPVINTETSGPSEEPAGLFSQGTTGGDIPAPQPMAGFPSAAPMPPRPQPVPTGAE. Residues 872 to 881 are compositionally biased toward pro residues; it reads APMPPRPQPV. The Zn(2+) site is built by Cys-905, Cys-907, Cys-916, and His-917.

It belongs to the SecA family. In terms of assembly, monomer and homodimer. Part of the essential Sec protein translocation apparatus which comprises SecA, SecYEG and auxiliary proteins SecDF-YajC and YidC. Requires Zn(2+) as cofactor.

Its subcellular location is the cell inner membrane. It localises to the cytoplasm. It carries out the reaction ATP + H2O + cellular proteinSide 1 = ADP + phosphate + cellular proteinSide 2.. In terms of biological role, part of the Sec protein translocase complex. Interacts with the SecYEG preprotein conducting channel. Has a central role in coupling the hydrolysis of ATP to the transfer of proteins into and across the cell membrane, serving both as a receptor for the preprotein-SecB complex and as an ATP-driven molecular motor driving the stepwise translocation of polypeptide chains across the membrane. This chain is Protein translocase subunit SecA, found in Gluconobacter oxydans (strain 621H) (Gluconobacter suboxydans).